The chain runs to 427 residues: Imidazolonepropionase (427 aa).

Residues H78 and H80 each coordinate Fe(3+). Residues H78 and H80 each contribute to the Zn(2+) site. 4-imidazolone-5-propanoate-binding residues include R87, Y150, and H183. Y150 contacts N-formimidoyl-L-glutamate. H255 contributes to the Fe(3+) binding site. H255 is a binding site for Zn(2+). Residue E258 coordinates 4-imidazolone-5-propanoate. Fe(3+) is bound at residue D330. Residue D330 participates in Zn(2+) binding. N-formimidoyl-L-glutamate-binding residues include N332 and G334. T335 is a binding site for 4-imidazolone-5-propanoate.

It belongs to the metallo-dependent hydrolases superfamily. HutI family. Zn(2+) is required as a cofactor. It depends on Fe(3+) as a cofactor.

Its subcellular location is the cytoplasm. The enzyme catalyses 4-imidazolone-5-propanoate + H2O = N-formimidoyl-L-glutamate. Its pathway is amino-acid degradation; L-histidine degradation into L-glutamate; N-formimidoyl-L-glutamate from L-histidine: step 3/3. In terms of biological role, catalyzes the hydrolytic cleavage of the carbon-nitrogen bond in imidazolone-5-propanoate to yield N-formimidoyl-L-glutamate. It is the third step in the universal histidine degradation pathway. This Herpetosiphon aurantiacus (strain ATCC 23779 / DSM 785 / 114-95) protein is Imidazolonepropionase.